Here is a 45-residue protein sequence, read N- to C-terminus: Photosystem II reaction center protein K (45 aa).

Residues 1–8 constitute a propeptide that is removed on maturation; it reads MEAALLLA. A helical transmembrane segment spans residues 24–44; that stretch reads LPIIPVFFLLLAFVWQAAVGF.

It belongs to the PsbK family. In terms of assembly, PSII is composed of 1 copy each of membrane proteins PsbA, PsbB, PsbC, PsbD, PsbE, PsbF, PsbH, PsbI, PsbJ, PsbK, PsbL, PsbM, PsbT, PsbX, PsbY, PsbZ, Psb30/Ycf12, peripheral proteins PsbO, CyanoQ (PsbQ), PsbU, PsbV and a large number of cofactors. It forms dimeric complexes.

The protein resides in the cellular thylakoid membrane. Its function is as follows. One of the components of the core complex of photosystem II (PSII). PSII is a light-driven water:plastoquinone oxidoreductase that uses light energy to abstract electrons from H(2)O, generating O(2) and a proton gradient subsequently used for ATP formation. It consists of a core antenna complex that captures photons, and an electron transfer chain that converts photonic excitation into a charge separation. The sequence is that of Photosystem II reaction center protein K from Nostoc sp. (strain PCC 7120 / SAG 25.82 / UTEX 2576).